A 181-amino-acid polypeptide reads, in one-letter code: ATP synthase subunit delta (181 aa).

The protein belongs to the ATPase delta chain family. As to quaternary structure, F-type ATPases have 2 components, F(1) - the catalytic core - and F(0) - the membrane proton channel. F(1) has five subunits: alpha(3), beta(3), gamma(1), delta(1), epsilon(1). F(0) has three main subunits: a(1), b(2) and c(10-14). The alpha and beta chains form an alternating ring which encloses part of the gamma chain. F(1) is attached to F(0) by a central stalk formed by the gamma and epsilon chains, while a peripheral stalk is formed by the delta and b chains.

The protein localises to the cell inner membrane. Functionally, f(1)F(0) ATP synthase produces ATP from ADP in the presence of a proton or sodium gradient. F-type ATPases consist of two structural domains, F(1) containing the extramembraneous catalytic core and F(0) containing the membrane proton channel, linked together by a central stalk and a peripheral stalk. During catalysis, ATP synthesis in the catalytic domain of F(1) is coupled via a rotary mechanism of the central stalk subunits to proton translocation. Its function is as follows. This protein is part of the stalk that links CF(0) to CF(1). It either transmits conformational changes from CF(0) to CF(1) or is implicated in proton conduction. The chain is ATP synthase subunit delta from Blochmanniella pennsylvanica (strain BPEN).